The sequence spans 435 residues: NADH-quinone oxidoreductase subunit D (435 aa).

It belongs to the complex I 49 kDa subunit family. In terms of assembly, NDH-1 is composed of 14 different subunits. Subunits NuoB, C, D, E, F, and G constitute the peripheral sector of the complex.

It localises to the cell inner membrane. The enzyme catalyses a quinone + NADH + 5 H(+)(in) = a quinol + NAD(+) + 4 H(+)(out). In terms of biological role, NDH-1 shuttles electrons from NADH, via FMN and iron-sulfur (Fe-S) centers, to quinones in the respiratory chain. The immediate electron acceptor for the enzyme in this species is believed to be ubiquinone. Couples the redox reaction to proton translocation (for every two electrons transferred, four hydrogen ions are translocated across the cytoplasmic membrane), and thus conserves the redox energy in a proton gradient. This chain is NADH-quinone oxidoreductase subunit D, found in Xanthomonas axonopodis pv. citri (strain 306).